We begin with the raw amino-acid sequence, 930 residues long: Polypeptide N-acetylgalactosaminyltransferase 5 (930 aa).

The Cytoplasmic portion of the chain corresponds to 1–12 (MNKIRKFFRGSG). A helical; Signal-anchor for type II membrane protein transmembrane segment spans residues 13–35 (RVLAFIFAASVIWLLFDMAALRL). The Lumenal portion of the chain corresponds to 36-930 (SFSEINAGLL…KWKFEKYYEV (895 aa)). The segment at 190 to 209 (KQEAPQNYNVSSDTSKQASE) is disordered. The segment covering 193–209 (APQNYNVSSDTSKQASE) has biased composition (polar residues). N-linked (GlcNAc...) asparagine glycosylation is found at Asn198, Asn213, and Asn283. Position 285 is a phosphoserine (Ser285). Asn287, Asn309, Asn355, and Asn387 each carry an N-linked (GlcNAc...) asparagine glycan. Residues 327–381 (DTKEVPNSKTQTVFPKLLGGSPHKQIPRNQSKTSSSPPALKKAVSQSKPTISGGL) form a disordered region. Over residues 353 to 363 (PRNQSKTSSSP) the composition is skewed to polar residues. 3 cysteine pairs are disulfide-bonded: Cys476/Cys708, Cys699/Cys779, and Cys812/Cys825. The catalytic subdomain A stretch occupies residues 485-594 (LPTTSIIMCF…VGWLEPLLER (110 aa)). Asp526 and Arg555 together coordinate substrate. Asn568 carries an N-linked (GlcNAc...) asparagine glycan. A Mn(2+)-binding site is contributed by Asp578. Position 579 (Ser579) interacts with substrate. Residue His580 participates in Mn(2+) binding. Residues 654–716 (IIRCPVMAGG…PCSRVGHIFR (63 aa)) are catalytic subdomain B. Substrate is bound at residue Trp685. Residue His713 coordinates Mn(2+). Substrate is bound by residues Arg716 and Tyr721. 3 N-linked (GlcNAc...) asparagine glycosylation sites follow: Asn766, Asn817, and Asn835. The region spanning 794–925 (KAPVVRASGV…MELQQKWKFE (132 aa)) is the Ricin B-type lectin domain. 2 disulfides stabilise this stretch: Cys848–Cys863 and Cys898–Cys913. The N-linked (GlcNAc...) asparagine glycan is linked to Asn902.

The protein belongs to the glycosyltransferase 2 family. GalNAc-T subfamily. As to quaternary structure, interacts with EXT2. Does not interact with EXT1, EXTL1 or EXTL3. It depends on Mn(2+) as a cofactor. In terms of tissue distribution, expressed at low level. Not expressed before E7.5 during embryogenesis. Expressed in dental mesenchyme and tongue. Accumulates in a subset of mesenchymal cells at the ventral-most portions of the 12.5 dpc maxilla and mandible underlying the dental lamina.

The protein localises to the golgi apparatus membrane. It catalyses the reaction L-seryl-[protein] + UDP-N-acetyl-alpha-D-galactosamine = a 3-O-[N-acetyl-alpha-D-galactosaminyl]-L-seryl-[protein] + UDP + H(+). The catalysed reaction is L-threonyl-[protein] + UDP-N-acetyl-alpha-D-galactosamine = a 3-O-[N-acetyl-alpha-D-galactosaminyl]-L-threonyl-[protein] + UDP + H(+). It functions in the pathway protein modification; protein glycosylation. In terms of biological role, catalyzes the initial reaction in O-linked oligosaccharide biosynthesis, the transfer of an N-acetyl-D-galactosamine residue to a serine or threonine residue on the protein receptor. Has activity toward EA2 peptide substrate, but has a weak activity toward Muc2 or Muc1b substrates. This chain is Polypeptide N-acetylgalactosaminyltransferase 5 (Galnt5), found in Mus musculus (Mouse).